Consider the following 192-residue polypeptide: Peptidyl-tRNA hydrolase (192 aa).

Tyr-14 contributes to the tRNA binding site. The active-site Proton acceptor is the His-19. Positions 64, 66, and 112 each coordinate tRNA.

It belongs to the PTH family. Monomer.

The protein resides in the cytoplasm. It catalyses the reaction an N-acyl-L-alpha-aminoacyl-tRNA + H2O = an N-acyl-L-amino acid + a tRNA + H(+). In terms of biological role, hydrolyzes ribosome-free peptidyl-tRNAs (with 1 or more amino acids incorporated), which drop off the ribosome during protein synthesis, or as a result of ribosome stalling. Its function is as follows. Catalyzes the release of premature peptidyl moieties from peptidyl-tRNA molecules trapped in stalled 50S ribosomal subunits, and thus maintains levels of free tRNAs and 50S ribosomes. In Prosthecochloris aestuarii (strain DSM 271 / SK 413), this protein is Peptidyl-tRNA hydrolase.